We begin with the raw amino-acid sequence, 210 residues long: Cell division protein SepF (210 aa).

2 disordered regions span residues 22–72 (DYYE…FDDA) and 79–98 (RGPREFDRTPPRFGGLRGST). 2 stretches are compositionally biased toward basic and acidic residues: residues 37–60 (RPREDRFEDEAYPRGYDDRAREYD) and 79–88 (RGPREFDRTP).

Belongs to the SepF family. Homodimer. Interacts with FtsZ.

The protein resides in the cytoplasm. Its function is as follows. Cell division protein that is part of the divisome complex and is recruited early to the Z-ring. Probably stimulates Z-ring formation, perhaps through the cross-linking of FtsZ protofilaments. Its function overlaps with FtsA. This Mycolicibacterium vanbaalenii (strain DSM 7251 / JCM 13017 / BCRC 16820 / KCTC 9966 / NRRL B-24157 / PYR-1) (Mycobacterium vanbaalenii) protein is Cell division protein SepF.